The following is a 453-amino-acid chain: Nuclear distribution protein nudF-2 (453 aa).

The region spanning 9–41 (QADELHRALIAYLTAANLPNTAAALREELNLSE) is the LisH domain. Residues 62–88 (SVVRLQKKIMDLESRNHILQSELDNAT) adopt a coiled-coil conformation. Positions 84–107 (LDNATPTSRQNKDPVAWLPRAPPR) are disordered. 7 WD repeats span residues 112 to 153 (SHRD…RTIK), 155 to 195 (HTKA…KNIR), 199 to 239 (GHDH…CVKT), 242 to 281 (GHAEWVRDVCPSLDGKYILSTSDDYTSRLWDVTITNPEPK), 286 to 345 (GHEH…IKTL), 347 to 386 (GHDNWVRGLVFHPGGKYLLSVSDDKTLRCWDLTQEGKCVK), and 391 to 449 (AHGH…LNVR).

The protein belongs to the WD repeat LIS1/nudF family. In terms of assembly, self-associates. Interacts with ro-11/nde1 and dynein.

Its subcellular location is the cytoplasm. It is found in the cytoskeleton. It localises to the spindle pole. Positively regulates the activity of the minus-end directed microtubule motor protein dynein. May enhance dynein-mediated microtubule sliding by targeting dynein to the microtubule plus end. Required for nuclear migration during vegetative growth as well as development. Required for retrograde early endosome (EE) transport from the hyphal tip. Required for localization of dynein to the mitotic spindle poles. Recruits additional proteins to the dynein complex at SPBs. This is Nuclear distribution protein nudF-2 (nmp-1) from Neurospora crassa (strain ATCC 24698 / 74-OR23-1A / CBS 708.71 / DSM 1257 / FGSC 987).